The primary structure comprises 101 residues: UPF0473 protein SUB1774 (101 aa).

The protein belongs to the UPF0473 family.

This is UPF0473 protein SUB1774 from Streptococcus uberis (strain ATCC BAA-854 / 0140J).